Here is a 657-residue protein sequence, read N- to C-terminus: Outer dense fiber protein 2 (657 aa).

Phosphoserine occurs at positions 73 and 74. Thr-92 is modified (phosphothreonine). Position 95 is a phosphoserine; by TSSK4 (Ser-95). Ser-106 and Ser-109 each carry phosphoserine. The residue at position 110 (Thr-110) is a Phosphothreonine. 2 positions are modified to phosphoserine: Ser-115 and Ser-129. A Glycyl lysine isopeptide (Lys-Gly) (interchain with G-Cter in SUMO2) cross-link involves residue Lys-138. At Ser-139 the chain carries Phosphoserine. 2 coiled-coil regions span residues 144–423 (QKGE…AEQL) and 461–635 (EIIV…SDLR). Phosphothreonine is present on Thr-231. 2 positions are modified to phosphoserine: Ser-261 and Ser-632.

The protein belongs to the ODF2 family. In terms of assembly, self-associates. Associates with microtubules and forms a fibrillar structure partially linked to the microtubule network. Interacts via its C-terminus with PLK1. Interacts with ODF1. Interacts with MARK4; the interaction is required for localization of ODF2 to centrioles. Interacts with TSSK4. Interacts with AKNA. Interacts with CFAP58. Interacts with BBOF1. Interacts with CCDC38. Interacts with CCDC42. In terms of processing, tyrosine phosphorylated. Phosphorylated on Ser-95 by TSSK4.

The protein localises to the cytoplasm. Its subcellular location is the cytoskeleton. It localises to the microtubule organizing center. It is found in the centrosome. The protein resides in the cell projection. The protein localises to the cilium. Its subcellular location is the centriole. It localises to the spindle pole. It is found in the flagellum. Seems to be a major component of sperm tail outer dense fibers (ODF). ODFs are filamentous structures located on the outside of the axoneme in the midpiece and principal piece of the mammalian sperm tail and may help to maintain the passive elastic structures and elastic recoil of the sperm tail. May have a modulating influence on sperm motility. Functions as a general scaffold protein that is specifically localized at the distal/subdistal appendages of mother centrioles. Component of the centrosome matrix required for the localization of PLK1 and NIN to the centrosomes. Required for the formation and/or maintenance of normal CETN1 assembly. In Bos taurus (Bovine), this protein is Outer dense fiber protein 2 (ODF2).